We begin with the raw amino-acid sequence, 426 residues long: Putative 3-oxoacyl-[acyl-carrier-protein] synthase, mitochondrial (426 aa).

The transit peptide at 1–18 (MKRVVITGLGAVTPLGNG) directs the protein to the mitochondrion. The region spanning 19–423 (VKTNWRNLIQ…GTNASLCFKK (405 aa)) is the Ketosynthase family 3 (KS3) domain. Active-site for beta-ketoacyl synthase activity residues include Cys-170, His-311, and His-351.

This sequence belongs to the thiolase-like superfamily. Beta-ketoacyl-ACP synthases family.

The protein localises to the mitochondrion. It carries out the reaction a fatty acyl-[ACP] + malonyl-[ACP] + H(+) = a 3-oxoacyl-[ACP] + holo-[ACP] + CO2. The catalysed reaction is butanoyl-[ACP] + malonyl-[ACP] + H(+) = 3-oxohexanoyl-[ACP] + holo-[ACP] + CO2. The enzyme catalyses hexanoyl-[ACP] + malonyl-[ACP] + H(+) = 3-oxooctanoyl-[ACP] + holo-[ACP] + CO2. It catalyses the reaction octanoyl-[ACP] + malonyl-[ACP] + H(+) = 3-oxodecanoyl-[ACP] + holo-[ACP] + CO2. It carries out the reaction decanoyl-[ACP] + malonyl-[ACP] + H(+) = 3-oxododecanoyl-[ACP] + holo-[ACP] + CO2. The catalysed reaction is dodecanoyl-[ACP] + malonyl-[ACP] + H(+) = 3-oxotetradecanoyl-[ACP] + holo-[ACP] + CO2. The enzyme catalyses tetradecanoyl-[ACP] + malonyl-[ACP] + H(+) = 3-oxohexadecanoyl-[ACP] + holo-[ACP] + CO2. The protein operates within lipid metabolism; fatty acid biosynthesis. May play a role in the biosynthesis of lipoic acid as well as longer chain fatty acids required for optimal mitochondrial function. The protein is Putative 3-oxoacyl-[acyl-carrier-protein] synthase, mitochondrial of Schizosaccharomyces pombe (strain 972 / ATCC 24843) (Fission yeast).